The primary structure comprises 323 residues: Beta-ketoacyl-[acyl-carrier-protein] synthase III (323 aa).

Active-site residues include C113 and H250. The interval 251–255 (QANKR) is ACP-binding. Residue N280 is part of the active site.

The protein belongs to the thiolase-like superfamily. FabH family. In terms of assembly, homodimer.

Its subcellular location is the cytoplasm. The catalysed reaction is malonyl-[ACP] + acetyl-CoA + H(+) = 3-oxobutanoyl-[ACP] + CO2 + CoA. Its pathway is lipid metabolism; fatty acid biosynthesis. In terms of biological role, catalyzes the condensation reaction of fatty acid synthesis by the addition to an acyl acceptor of two carbons from malonyl-ACP. Catalyzes the first condensation reaction which initiates fatty acid synthesis and may therefore play a role in governing the total rate of fatty acid production. Possesses both acetoacetyl-ACP synthase and acetyl transacylase activities. Its substrate specificity determines the biosynthesis of branched-chain and/or straight-chain of fatty acids. This is Beta-ketoacyl-[acyl-carrier-protein] synthase III from Brucella melitensis biotype 2 (strain ATCC 23457).